The chain runs to 507 residues: Maturase K (507 aa).

This sequence belongs to the intron maturase 2 family. MatK subfamily.

It localises to the plastid. The protein localises to the chloroplast. Usually encoded in the trnK tRNA gene intron. Probably assists in splicing its own and other chloroplast group II introns. This chain is Maturase K, found in Fagopyrum tataricum (Tartarian buckwheat).